The following is a 373-amino-acid chain: Transaminase AMT5 (373 aa).

Arginine 92 serves as a coordination point for pyridoxal 5'-phosphate. Position 196 is an N6-(pyridoxal phosphate)lysine (lysine 196). Glutamate 232 is a binding site for pyridoxal 5'-phosphate.

This sequence belongs to the class-IV pyridoxal-phosphate-dependent aminotransferase family. It depends on pyridoxal 5'-phosphate as a cofactor.

The protein operates within mycotoxin biosynthesis. Its function is as follows. Transaminase; part of the gene clusters that mediate the biosynthesis of AM-toxins, host-selective toxins (HSTs) causing Alternaria blotch on apple, a worldwide distributed disease. AM-toxins are cyclic depsipeptides containing the 3 residues 2-hydroxy-isovaleric acid (2-HIV), dehydroalanine, L-alanine which are common for all 3 AM-toxins I to III. The fourth precursor is L-alpha-amino-methoxyphenyl-valeric acid (L-Amv) for AM-toxin I, L-alpha-amino-phenyl-valeric acid (L-Apv) for AM-toxin II, and L-alpha-amino-hydroxyphenyl-valeric acid (L-Ahv) for AM-toxin III. AM-toxins have two target sites for affecting susceptible apple cells; they cause invagination of the plasma membrane and electrolyte loss and chloroplast disorganization. The non-ribosomal peptide synthetase AMT1 contains 4 catalytic modules and is responsible for activation of each residue in AM-toxin. The aldo-keto reductase AMT2 catalyzes the conversion of 2-keto-isovaleric acid (2-KIV) to 2-hydroxy-isovaleric acid (2-HIV), one of the precursor residues incorporated by AMT1 during AM-toxin biosynthesis, by reduction of its ketone to an alcohol. The cytochrome P450 monooxygenase AMT3 and the thioesterase AMT4 are also important for AM-toxin production, but their exact function within the AM-toxin biosynthesis are not known yet. Up to 21 proteins (including AMT1 to AMT4) are predicted to be involved in AM-toxin biosynthesis since their expression is highly up-regulated in AM-toxin-producing cultures. This is Transaminase AMT5 from Alternaria alternata (Alternaria rot fungus).